The following is an 83-amino-acid chain: NAD(P)H-quinone oxidoreductase subunit L (83 aa).

2 helical membrane-spanning segments follow: residues 15-35 (LMVL…VPLL) and 53-73 (LSAY…APFL).

It belongs to the complex I NdhL subunit family. In terms of assembly, NDH-1 can be composed of about 15 different subunits; different subcomplexes with different compositions have been identified which probably have different functions.

Its subcellular location is the cellular thylakoid membrane. It catalyses the reaction a plastoquinone + NADH + (n+1) H(+)(in) = a plastoquinol + NAD(+) + n H(+)(out). The catalysed reaction is a plastoquinone + NADPH + (n+1) H(+)(in) = a plastoquinol + NADP(+) + n H(+)(out). NDH-1 shuttles electrons from an unknown electron donor, via FMN and iron-sulfur (Fe-S) centers, to quinones in the respiratory and/or the photosynthetic chain. The immediate electron acceptor for the enzyme in this species is believed to be plastoquinone. Couples the redox reaction to proton translocation, and thus conserves the redox energy in a proton gradient. Cyanobacterial NDH-1 also plays a role in inorganic carbon-concentration. This Prochlorococcus marinus (strain MIT 9303) protein is NAD(P)H-quinone oxidoreductase subunit L.